We begin with the raw amino-acid sequence, 292 residues long: ATP phosphoribosyltransferase (292 aa).

The protein belongs to the ATP phosphoribosyltransferase family. Long subfamily. It depends on Mg(2+) as a cofactor.

The protein resides in the cytoplasm. The catalysed reaction is 1-(5-phospho-beta-D-ribosyl)-ATP + diphosphate = 5-phospho-alpha-D-ribose 1-diphosphate + ATP. It functions in the pathway amino-acid biosynthesis; L-histidine biosynthesis; L-histidine from 5-phospho-alpha-D-ribose 1-diphosphate: step 1/9. With respect to regulation, feedback inhibited by histidine. Functionally, catalyzes the condensation of ATP and 5-phosphoribose 1-diphosphate to form N'-(5'-phosphoribosyl)-ATP (PR-ATP). Has a crucial role in the pathway because the rate of histidine biosynthesis seems to be controlled primarily by regulation of HisG enzymatic activity. In Desulfatibacillum aliphaticivorans, this protein is ATP phosphoribosyltransferase.